The chain runs to 103 residues: Phosphoribosyl-ATP pyrophosphatase (103 aa).

It belongs to the PRA-PH family.

It is found in the cytoplasm. The enzyme catalyses 1-(5-phospho-beta-D-ribosyl)-ATP + H2O = 1-(5-phospho-beta-D-ribosyl)-5'-AMP + diphosphate + H(+). It participates in amino-acid biosynthesis; L-histidine biosynthesis; L-histidine from 5-phospho-alpha-D-ribose 1-diphosphate: step 2/9. This chain is Phosphoribosyl-ATP pyrophosphatase (hisE), found in Cereibacter sphaeroides (strain ATCC 17023 / DSM 158 / JCM 6121 / CCUG 31486 / LMG 2827 / NBRC 12203 / NCIMB 8253 / ATH 2.4.1.) (Rhodobacter sphaeroides).